A 628-amino-acid polypeptide reads, in one-letter code: tRNA uridine 5-carboxymethylaminomethyl modification enzyme MnmG (628 aa).

FAD is bound at residue 13–18; it reads GAGHAG. 273 to 287 provides a ligand contact to NAD(+); it reads GPRYCPSIEDKIVRF.

The protein belongs to the MnmG family. Homodimer. Heterotetramer of two MnmE and two MnmG subunits. FAD serves as cofactor.

It localises to the cytoplasm. Its function is as follows. NAD-binding protein involved in the addition of a carboxymethylaminomethyl (cmnm) group at the wobble position (U34) of certain tRNAs, forming tRNA-cmnm(5)s(2)U34. The sequence is that of tRNA uridine 5-carboxymethylaminomethyl modification enzyme MnmG from Buchnera aphidicola subsp. Acyrthosiphon pisum (strain 5A).